A 383-amino-acid chain; its full sequence is tRNA-specific 2-thiouridylase MnmA (383 aa).

ATP-binding positions include 9-16 and M35; that span reads GMSGGVDS. Residues 95 to 97 form an interaction with target base in tRNA region; sequence NPD. Catalysis depends on C100, which acts as the Nucleophile. Residues C100 and C196 are joined by a disulfide bond. G124 is an ATP binding site. The interval 146–148 is interaction with tRNA; it reads KDQ. The active-site Cysteine persulfide intermediate is the C196. Positions 308 to 309 are interaction with tRNA; sequence RY.

Belongs to the MnmA/TRMU family.

The protein resides in the cytoplasm. The catalysed reaction is S-sulfanyl-L-cysteinyl-[protein] + uridine(34) in tRNA + AH2 + ATP = 2-thiouridine(34) in tRNA + L-cysteinyl-[protein] + A + AMP + diphosphate + H(+). Its function is as follows. Catalyzes the 2-thiolation of uridine at the wobble position (U34) of tRNA, leading to the formation of s(2)U34. The polypeptide is tRNA-specific 2-thiouridylase MnmA (Burkholderia lata (strain ATCC 17760 / DSM 23089 / LMG 22485 / NCIMB 9086 / R18194 / 383)).